A 135-amino-acid chain; its full sequence is Small ribosomal subunit protein uS12 (135 aa).

Residues Met-1 to Lys-20 form a disordered region. Positions Arg-9–Lys-18 are enriched in basic residues. A 3-methylthioaspartic acid modification is found at Asp-102.

The protein belongs to the universal ribosomal protein uS12 family. In terms of assembly, part of the 30S ribosomal subunit. Contacts proteins S8 and S17. May interact with IF1 in the 30S initiation complex.

Functionally, with S4 and S5 plays an important role in translational accuracy. In terms of biological role, interacts with and stabilizes bases of the 16S rRNA that are involved in tRNA selection in the A site and with the mRNA backbone. Located at the interface of the 30S and 50S subunits, it traverses the body of the 30S subunit contacting proteins on the other side and probably holding the rRNA structure together. The combined cluster of proteins S8, S12 and S17 appears to hold together the shoulder and platform of the 30S subunit. The polypeptide is Small ribosomal subunit protein uS12 (Lactobacillus helveticus (strain DPC 4571)).